The following is a 283-amino-acid chain: Diaminopimelate epimerase (283 aa).

Asn13 and Asn65 together coordinate substrate. Cys74 serves as the catalytic Proton donor. Substrate-binding positions include Gly75–Asn76, Asn196, and Glu214–Arg215. Catalysis depends on Cys223, which acts as the Proton acceptor. Position 224 to 225 (Gly224 to Thr225) interacts with substrate.

It belongs to the diaminopimelate epimerase family. As to quaternary structure, homodimer.

It is found in the cytoplasm. It catalyses the reaction (2S,6S)-2,6-diaminopimelate = meso-2,6-diaminopimelate. Its pathway is amino-acid biosynthesis; L-lysine biosynthesis via DAP pathway; DL-2,6-diaminopimelate from LL-2,6-diaminopimelate: step 1/1. In terms of biological role, catalyzes the stereoinversion of LL-2,6-diaminopimelate (L,L-DAP) to meso-diaminopimelate (meso-DAP), a precursor of L-lysine and an essential component of the bacterial peptidoglycan. The chain is Diaminopimelate epimerase from Alkaliphilus metalliredigens (strain QYMF).